Here is a 381-residue protein sequence, read N- to C-terminus: Cytochrome b (381 aa).

The next 4 membrane-spanning stretches (helical) occupy residues 34–54 (FGSLLGLCLIIQILTGLFLAM), 78–99 (WLIRNIHANGASLFFICVYLHI), 114–134 (WNIGVILLFLLMATAFVGYVL), and 179–199 (FFAFHFLLPFLILALTIIHLL). The heme b site is built by histidine 84 and histidine 98. Residues histidine 183 and histidine 197 each contribute to the heme b site. An a ubiquinone-binding site is contributed by histidine 202. 4 helical membrane passes run 227–247 (YKDLLGFFVMIFFLAVFALFM), 289–309 (LGGVLALLFSIFILMLVPLLH), 321–341 (MTQIFFWLLVANSIILTWIGG), and 348–368 (FIMVGQIASISYFSLFLIIMP).

It belongs to the cytochrome b family. In terms of assembly, the cytochrome bc1 complex contains 3 respiratory subunits (MT-CYB, CYC1 and UQCRFS1), 2 core proteins (UQCRC1 and UQCRC2) and probably 6 low-molecular weight proteins. The cofactor is heme b.

Its subcellular location is the mitochondrion inner membrane. Component of the ubiquinol-cytochrome c reductase complex (complex III or cytochrome b-c1 complex) that is part of the mitochondrial respiratory chain. The b-c1 complex mediates electron transfer from ubiquinol to cytochrome c. Contributes to the generation of a proton gradient across the mitochondrial membrane that is then used for ATP synthesis. The chain is Cytochrome b (mt-cyb) from Carcharhinus plumbeus (Sandbar shark).